A 126-amino-acid chain; its full sequence is UPF0538 protein C2orf76 homolog (126 aa).

The protein belongs to the UPF0538 family.

This Danio rerio (Zebrafish) protein is UPF0538 protein C2orf76 homolog.